Here is an 83-residue protein sequence, read N- to C-terminus: Small ribosomal subunit protein eS21 (83 aa).

Belongs to the eukaryotic ribosomal protein eS21 family. In terms of assembly, component of the 40S small ribosomal subunit.

The protein resides in the cytoplasm. It is found in the cytosol. Its subcellular location is the rough endoplasmic reticulum. Component of the small ribosomal subunit. The ribosome is a large ribonucleoprotein complex responsible for the synthesis of proteins in the cell. The chain is Small ribosomal subunit protein eS21 (rps21) from Xenopus tropicalis (Western clawed frog).